The chain runs to 186 residues: Allergen Fel d 4 (186 aa).

An N-terminal signal peptide occupies residues 1–15 (MKLLLLCLGLILVCA). 2 N-linked (GlcNAc...) asparagine glycosylation sites follow: Asn51 and Asn66. A disulfide bridge connects residues Cys81 and Cys171.

Belongs to the calycin superfamily. Lipocalin family. In terms of tissue distribution, abundant in urine (at protein level).

Its subcellular location is the secreted. May be a pheromone carrier. Acts as a kairomone, detected by the prey vomeronasal organ and inducing fear reactions in mice. The protein is Allergen Fel d 4 of Felis catus (Cat).